A 240-amino-acid chain; its full sequence is UDP-2,3-diacylglucosamine hydrolase (240 aa).

Residues aspartate 8, histidine 10, aspartate 41, asparagine 79, and histidine 114 each contribute to the Mn(2+) site. 79-80 (NR) contacts substrate. Positions 122, 160, 164, 167, and 195 each coordinate substrate. Residues histidine 195 and histidine 197 each contribute to the Mn(2+) site.

It belongs to the LpxH family. It depends on Mn(2+) as a cofactor.

It localises to the cell inner membrane. The catalysed reaction is UDP-2-N,3-O-bis[(3R)-3-hydroxytetradecanoyl]-alpha-D-glucosamine + H2O = 2-N,3-O-bis[(3R)-3-hydroxytetradecanoyl]-alpha-D-glucosaminyl 1-phosphate + UMP + 2 H(+). It participates in glycolipid biosynthesis; lipid IV(A) biosynthesis; lipid IV(A) from (3R)-3-hydroxytetradecanoyl-[acyl-carrier-protein] and UDP-N-acetyl-alpha-D-glucosamine: step 4/6. In terms of biological role, hydrolyzes the pyrophosphate bond of UDP-2,3-diacylglucosamine to yield 2,3-diacylglucosamine 1-phosphate (lipid X) and UMP by catalyzing the attack of water at the alpha-P atom. Involved in the biosynthesis of lipid A, a phosphorylated glycolipid that anchors the lipopolysaccharide to the outer membrane of the cell. The sequence is that of UDP-2,3-diacylglucosamine hydrolase from Shigella sonnei (strain Ss046).